Here is a 102-residue protein sequence, read N- to C-terminus: Large ribosomal subunit protein bL21 (102 aa).

A compositionally biased stretch (basic residues) spans 79 to 91 (RKDSKRKKGHRQP). The disordered stretch occupies residues 79 to 102 (RKDSKRKKGHRQPYTKLTIDKINA).

This sequence belongs to the bacterial ribosomal protein bL21 family. In terms of assembly, part of the 50S ribosomal subunit. Contacts protein L20.

Functionally, this protein binds to 23S rRNA in the presence of protein L20. The chain is Large ribosomal subunit protein bL21 from Staphylococcus carnosus (strain TM300).